The sequence spans 187 residues: Transmembrane protein 17A (187 aa).

4 helical membrane-spanning segments follow: residues 49–69, 82–102, 114–134, and 146–166; these read IFLY…VIML, FILV…LYLG, LAGF…FLLC, and AVHG…IFAL.

Belongs to the TMEM17 family. As to quaternary structure, part of the tectonic-like complex (also named B9 complex).

It localises to the cell projection. It is found in the cilium membrane. Its function is as follows. Transmembrane component of the tectonic-like complex, a complex localized at the transition zone of primary cilia and acting as a barrier that prevents diffusion of transmembrane proteins between the cilia and plasma membranes. Required for ciliogenesis and sonic hedgehog/SHH signaling. The polypeptide is Transmembrane protein 17A (tmem17-a) (Xenopus tropicalis (Western clawed frog)).